Here is a 416-residue protein sequence, read N- to C-terminus: MLEQMGIAAKAASYKLALLSSGEKNRVLEKIADELEAQMESILSANVQDVEQARANGLSEAMLDRLALTPARLKAIADDVRQVCNLADPVGQVIDGGLLDSGLRLERRRVPLGVVGVIYEARPNVTVDVASLCLKTGNAVILRGGKETHRTNAATVRVIQKALKACGLPEAAVQAIDNPDRSLVNEMLRMDKYIDMLIPRGGAGLHKLCREQSTIPVITGGIGVCHIFVDSSADIAPALKIIVNAKTQRPSTCNTVETLLVHQDIAERFLPALSKQMAESGVTLHGDETVMQALHGPAKLVPLKPEELDNEFLSLDLNVVVVENMDGAIAHIREHGTQHSDAILTCDMHNAARFVNEVDSAAVYVNASTRFTDGGQFGLGAEVAVSTQKLHARGPMGLEALTTYKWIGFGDGTIRA.

The protein belongs to the gamma-glutamyl phosphate reductase family.

The protein resides in the cytoplasm. The catalysed reaction is L-glutamate 5-semialdehyde + phosphate + NADP(+) = L-glutamyl 5-phosphate + NADPH + H(+). The protein operates within amino-acid biosynthesis; L-proline biosynthesis; L-glutamate 5-semialdehyde from L-glutamate: step 2/2. Functionally, catalyzes the NADPH-dependent reduction of L-glutamate 5-phosphate into L-glutamate 5-semialdehyde and phosphate. The product spontaneously undergoes cyclization to form 1-pyrroline-5-carboxylate. This chain is Gamma-glutamyl phosphate reductase, found in Salmonella heidelberg (strain SL476).